The primary structure comprises 604 residues: Polycomb group protein EMF2B (604 aa).

The C2H2-type zinc-finger motif lies at 310–331; sequence CPFCLVPCGSFKGLGCHLNASH. The tract at residues 396–440 is disordered; it reads PHIVDSGSPEDAQAGSEDDYVQRENGSSVAHASVDPANSLHGSNL. The interval 454-589 is VEFS-box; it reads LSVERADPRN…DARAMNACNT (136 aa).

This sequence belongs to the VEFS (VRN2-EMF2-FIS2-SU(Z)12) family. As to quaternary structure, component of the polycomb repressive complex 2 (PRC2), composed of the core PRC2 components FIE2, EZ1 and CLF. PRC2 methylates 'Lys-27' residues of histone H3 (H3K27me3), leading to transcriptional repression of the affected target gene. Widely expressed.

In terms of biological role, polycomb group (PcG) protein. PcG proteins act by forming multiprotein complexes, which are required to maintain the transcriptionally repressive state of homeotic genes throughout development. PcG proteins are not required to initiate repression, but to maintain it during later stages of development. They act via the methylation of histones, rendering chromatin heritably changed in its expressibility. Polycomb group (PcG) protein involved in the repression of flowering under long day (LD) conditions. Regulates floret development. The sequence is that of Polycomb group protein EMF2B from Oryza sativa subsp. japonica (Rice).